A 561-amino-acid chain; its full sequence is Dihydroxy-acid dehydratase (561 aa).

Cys-50 is a binding site for [2Fe-2S] cluster. Position 82 (Asp-82) interacts with Mg(2+). Residue Cys-123 participates in [2Fe-2S] cluster binding. Residues Asp-124 and Lys-125 each contribute to the Mg(2+) site. Lys-125 is modified (N6-carboxylysine). Residue Cys-195 coordinates [2Fe-2S] cluster. Mg(2+) is bound at residue Glu-447. Catalysis depends on Ser-473, which acts as the Proton acceptor.

Belongs to the IlvD/Edd family. In terms of assembly, homodimer. [2Fe-2S] cluster serves as cofactor. Mg(2+) is required as a cofactor.

It catalyses the reaction (2R)-2,3-dihydroxy-3-methylbutanoate = 3-methyl-2-oxobutanoate + H2O. The enzyme catalyses (2R,3R)-2,3-dihydroxy-3-methylpentanoate = (S)-3-methyl-2-oxopentanoate + H2O. Its pathway is amino-acid biosynthesis; L-isoleucine biosynthesis; L-isoleucine from 2-oxobutanoate: step 3/4. It functions in the pathway amino-acid biosynthesis; L-valine biosynthesis; L-valine from pyruvate: step 3/4. In terms of biological role, functions in the biosynthesis of branched-chain amino acids. Catalyzes the dehydration of (2R,3R)-2,3-dihydroxy-3-methylpentanoate (2,3-dihydroxy-3-methylvalerate) into 2-oxo-3-methylpentanoate (2-oxo-3-methylvalerate) and of (2R)-2,3-dihydroxy-3-methylbutanoate (2,3-dihydroxyisovalerate) into 2-oxo-3-methylbutanoate (2-oxoisovalerate), the penultimate precursor to L-isoleucine and L-valine, respectively. In Synechocystis sp. (strain ATCC 27184 / PCC 6803 / Kazusa), this protein is Dihydroxy-acid dehydratase.